The sequence spans 384 residues: D-galactosamine-6-phosphate deaminase AgaS (384 aa).

SIS domains follow at residues 45-197 (LEPL…SQTF) and 215-364 (SEGV…PDTP).

Belongs to the SIS family. AgaS subfamily.

It catalyses the reaction D-galactosamine 6-phosphate + H2O = D-tagatopyranose 1-phosphate + NH4(+). In terms of biological role, catalyzes the isomerization-deamination of galactosamine 6-phosphate to form tagatofuranose 6-phosphate and ammonium ion. The polypeptide is D-galactosamine-6-phosphate deaminase AgaS (Escherichia coli O157:H7).